Reading from the N-terminus, the 126-residue chain is Integrin alpha-M (126 aa).

Asn25, Asn78, and Asn106 each carry an N-linked (GlcNAc...) asparagine glycan.

This sequence belongs to the integrin alpha chain family. In terms of assembly, heterodimer of an alpha and a beta chain. ITGAM associates with ITGB2. Found in a complex with CD177 and ITGB2/CD18. Interacts with JAM3. Interacts with THBD. Interacts with TMEM268; this interaction inhibits ITGAM degradation via the endosome-lysosome pathway.

It localises to the cell membrane. The protein resides in the membrane raft. In terms of biological role, integrin ITGAM/ITGB2 is implicated in various adhesive interactions of monocytes, macrophages and granulocytes as well as in mediating the uptake of complement-coated particles. It is identical with CR-3, the receptor for the iC3b fragment of the third complement component. It probably recognizes the R-G-D peptide in C3b. Integrin ITGAM/ITGB2 is also a receptor for fibrinogen, factor X and ICAM1. It recognizes P1 and P2 peptides of fibrinogen gamma chain. Regulates neutrophil migration. In association with beta subunit ITGB2/CD18, required for CD177-PRTN3-mediated activation of TNF primed neutrophils. May regulate phagocytosis-induced apoptosis in extravasated neutrophils. May play a role in mast cell development. Required with TYROBP/DAP12 in microglia to control production of microglial superoxide ions which promote the neuronal apoptosis that occurs during brain development. This is Integrin alpha-M (ITGAM) from Cavia porcellus (Guinea pig).